Consider the following 85-residue polypeptide: Small ribosomal subunit protein eS21 (85 aa).

This sequence belongs to the eukaryotic ribosomal protein eS21 family. In terms of assembly, component of the 40S small ribosomal subunit.

The protein resides in the cytoplasm. It localises to the cytosol. Its subcellular location is the rough endoplasmic reticulum. In Pectinaria gouldii (Trumpet worm), this protein is Small ribosomal subunit protein eS21 (rps-21).